A 158-amino-acid chain; its full sequence is uncharacterized protein (158 aa).

Helical transmembrane passes span 45-65 (GIFF…PAVI), 76-96 (LAIG…IFAW), and 106-126 (FILV…VFAL).

The protein to U.parvum UU007, UU041 and UU042.

It is found in the cell membrane. This is an uncharacterized protein from Ureaplasma parvum serovar 3 (strain ATCC 700970).